A 496-amino-acid chain; its full sequence is Probable cytosol aminopeptidase (496 aa).

Mn(2+) contacts are provided by Lys-262 and Asp-267. Residue Lys-274 is part of the active site. The Mn(2+) site is built by Asp-285, Asp-344, and Glu-346. Arg-348 is a catalytic residue.

Belongs to the peptidase M17 family. Mn(2+) serves as cofactor.

Its subcellular location is the cytoplasm. The catalysed reaction is Release of an N-terminal amino acid, Xaa-|-Yaa-, in which Xaa is preferably Leu, but may be other amino acids including Pro although not Arg or Lys, and Yaa may be Pro. Amino acid amides and methyl esters are also readily hydrolyzed, but rates on arylamides are exceedingly low.. It catalyses the reaction Release of an N-terminal amino acid, preferentially leucine, but not glutamic or aspartic acids.. Functionally, presumably involved in the processing and regular turnover of intracellular proteins. Catalyzes the removal of unsubstituted N-terminal amino acids from various peptides. The sequence is that of Probable cytosol aminopeptidase from Rhizobium johnstonii (strain DSM 114642 / LMG 32736 / 3841) (Rhizobium leguminosarum bv. viciae).